The chain runs to 244 residues: MGNKNIKPSKENRLSILYKDRMDSFKRGSWATSSFREKSHATIQRFLSLRREHVKVDHPDKFLELKREIYAIIQKSSSIDVDKRTKLMSNIKTMMINPFMIEGLMTSLESLDPDNKMSYSSVMILGEFDIINISDNKAAFEFINSLLKSLLLLNTSQLKLLEYSISNDLLYTHINALEYIIKNTFNVPERQLILRCQYLTPIFSDLLKYAGLTIKSNILMWNKKFIKPVSDLYTSMQLLHCVTV.

The protein belongs to the orthopoxvirus A47 protein family.

The chain is Protein A47 from Variola virus.